The sequence spans 247 residues: MSNRDTLFSAPIARLGDWTFDERVAEVFPDMIQRSVPGYSNIISMIGMLAERFVQPASQVYDLGCSLGAATLSVRRNVHHDGCKIIAVDNSPAMVERCRRHIDAFKAQTPVEVIEDDIRNITIENASMVVLNFTLQFLNPDDRQLLLNKIFQGLNPGGALVLSEKFSFEDSVVGELLFNMHHDFKRANGYSELEISQKRSMLENVMLTDSVETHKARLRKAGFEHSELWFQCFNFGSLVAVKGGSAT.

S-adenosyl-L-methionine-binding positions include Tyr39, 64–66, 89–90, 117–118, Asn132, and Arg199; these read GCS, DN, and DI.

The protein belongs to the class I-like SAM-binding methyltransferase superfamily. Cx-SAM synthase family. In terms of assembly, homodimer.

The catalysed reaction is prephenate + S-adenosyl-L-methionine = carboxy-S-adenosyl-L-methionine + 3-phenylpyruvate + H2O. Catalyzes the conversion of S-adenosyl-L-methionine (SAM) to carboxy-S-adenosyl-L-methionine (Cx-SAM). The polypeptide is Carboxy-S-adenosyl-L-methionine synthase (Cronobacter sakazakii (strain ATCC BAA-894) (Enterobacter sakazakii)).